The following is a 297-amino-acid chain: Bifunctional protein FolD (297 aa).

NADP(+) contacts are provided by residues 166 to 168 (GRS), serine 191, and isoleucine 232.

It belongs to the tetrahydrofolate dehydrogenase/cyclohydrolase family. As to quaternary structure, homodimer.

It catalyses the reaction (6R)-5,10-methylene-5,6,7,8-tetrahydrofolate + NADP(+) = (6R)-5,10-methenyltetrahydrofolate + NADPH. It carries out the reaction (6R)-5,10-methenyltetrahydrofolate + H2O = (6R)-10-formyltetrahydrofolate + H(+). It participates in one-carbon metabolism; tetrahydrofolate interconversion. Catalyzes the oxidation of 5,10-methylenetetrahydrofolate to 5,10-methenyltetrahydrofolate and then the hydrolysis of 5,10-methenyltetrahydrofolate to 10-formyltetrahydrofolate. This is Bifunctional protein FolD from Phenylobacterium zucineum (strain HLK1).